Reading from the N-terminus, the 396-residue chain is Tyrosine--tRNA ligase (396 aa).

Residues P43–H52 carry the 'HIGH' region motif. A 'KMSKS' region motif is present at residues K227–S231. K230 contributes to the ATP binding site. The S4 RNA-binding domain occupies T338–I396.

This sequence belongs to the class-I aminoacyl-tRNA synthetase family. TyrS type 2 subfamily. In terms of assembly, homodimer.

The protein resides in the cytoplasm. It carries out the reaction tRNA(Tyr) + L-tyrosine + ATP = L-tyrosyl-tRNA(Tyr) + AMP + diphosphate + H(+). Functionally, catalyzes the attachment of tyrosine to tRNA(Tyr) in a two-step reaction: tyrosine is first activated by ATP to form Tyr-AMP and then transferred to the acceptor end of tRNA(Tyr). The polypeptide is Tyrosine--tRNA ligase (Dehalococcoides mccartyi (strain CBDB1)).